We begin with the raw amino-acid sequence, 652 residues long: DNA ligase (652 aa).

NAD(+)-binding positions include Asp-29–Asp-33, Ser-78–Leu-79, and Glu-107. Residue Lys-109 is the N6-AMP-lysine intermediate of the active site. Arg-130, Glu-164, Lys-278, and Lys-302 together coordinate NAD(+). Cys-395, Cys-398, Cys-413, and Cys-418 together coordinate Zn(2+). Residues Asn-577–Phe-652 form the BRCT domain.

It belongs to the NAD-dependent DNA ligase family. LigA subfamily. Mg(2+) serves as cofactor. Mn(2+) is required as a cofactor.

It catalyses the reaction NAD(+) + (deoxyribonucleotide)n-3'-hydroxyl + 5'-phospho-(deoxyribonucleotide)m = (deoxyribonucleotide)n+m + AMP + beta-nicotinamide D-nucleotide.. DNA ligase that catalyzes the formation of phosphodiester linkages between 5'-phosphoryl and 3'-hydroxyl groups in double-stranded DNA using NAD as a coenzyme and as the energy source for the reaction. It is essential for DNA replication and repair of damaged DNA. The polypeptide is DNA ligase (Streptococcus pyogenes serotype M6 (strain ATCC BAA-946 / MGAS10394)).